The sequence spans 516 residues: 3-phosphoshikimate 1-carboxyvinyltransferase, chloroplastic (516 aa).

The N-terminal 72 residues, 1–72 (MAQINNMAQG…RISASVATAQ (72 aa)), are a transit peptide targeting the chloroplast. Positions 95, 96, and 100 each coordinate 3-phosphoshikimate. Lys95 contacts phosphoenolpyruvate. 2 residues coordinate phosphoenolpyruvate: Gly173 and Arg203. 3-phosphoshikimate is bound by residues Ser250, Ser251, Gln252, Ser278, Asp403, and Lys430. Gln252 provides a ligand contact to phosphoenolpyruvate. Asp403 functions as the Proton acceptor in the catalytic mechanism. Phosphoenolpyruvate contacts are provided by Arg434, Arg476, and Lys501.

It belongs to the EPSP synthase family. As to expression, mostly expressed in flower petals, and, to a lower extent, in roots, stems and anthers, but barely in leaves.

The protein localises to the plastid. It localises to the chloroplast. The enzyme catalyses 3-phosphoshikimate + phosphoenolpyruvate = 5-O-(1-carboxyvinyl)-3-phosphoshikimate + phosphate. The protein operates within metabolic intermediate biosynthesis; chorismate biosynthesis; chorismate from D-erythrose 4-phosphate and phosphoenolpyruvate: step 6/7. With respect to regulation, competitively inhibited by glyphosate. Its function is as follows. Catalyzes the transfer of the enolpyruvyl moiety of phosphoenolpyruvate (PEP) to the 5-hydroxyl of shikimate-3-phosphate (S3P) to produce enolpyruvyl shikimate-3-phosphate and inorganic phosphate. Involved in the accumulation of volatile benzoides in flowers, scent attracting pollinators (e.g. the night-active hawkmoth pollinator Manduca sexta). In Petunia hybrida (Petunia), this protein is 3-phosphoshikimate 1-carboxyvinyltransferase, chloroplastic.